Consider the following 532-residue polypeptide: Putative 57 kDa heat shock protein (532 aa).

SHSP domains are found at residues 25-134 (VNGP…CKIT) and 439-532 (SVLE…IPSN).

This sequence belongs to the small heat shock protein (HSP20) family.

In Arabidopsis thaliana (Mouse-ear cress), this protein is Putative 57 kDa heat shock protein.